A 1465-amino-acid chain; its full sequence is MGARGSVLSGKKTDELEKVRLRPGGKKKYMLKHVVWAVNELDRFGLAESLLESKEGCQKILKVLAPLVPTGSENLKSLFNIVCVIFCLHAEEKVKDTEEAKKIAQRHLAADTEKMPATNKPTAPPSGGNYPVQQLAGNYVHLPLSPRTLNAWVKLVEEKKFGAEVVPGFQALSEGCTPYDINQMLNCVGEHQAAMQIIREIINEEAADWDQQHPSPGPMPAGQLRDPRGSDIAGTTSTVEEQIQWMYRAQNPVPVGNIYRRWIQLGLQKCVRMYNPTNILDIKQGPKEPFQSYVDRFYKSLRAEQTDPAVKNWMTQTLLIQNANPDCKLVLKGLGMNPTLEEMLTACQGIGGPGQKARLMAEALKEALTPAPIPFAAVQQKAGKRGTVTCWNCGKQGHTARQCRAPRRQGCWKCGKTGHIMSKCPERQAGFLRVRTLGKEASQLPHDPSASGSDTICTPDEPSRGHDTSGGDTICAPCRSSSGDAEKLHADGETTEREPRETLQGGDRGFAAPQFSLWRRPVVKACIEGQSVEVLLDTGVDDSIVAGIELGSNYTPKIVGGIGGFINTKEYKDVEIEVVGKRVRATIMTGDTPINIFGRNILNTLGMTLNFPVAKVEPVKVELKPGKDGPKIRQWPLSREKILALKEICEKMEKEGQLEEAPPTNPYNTPTFAIKKKDKNKWRMLIDFRELNKVTQDFTEVNWVFPTRQVAEKRRITVIDVGDAYFSIPLDPNFRQYTAFTLPSVNNAEPGKRYIYKVLPQGWKGSQSICQYSMRKVLDPFRKANSDVIIIQYMDDILIASDRSDLEHDRVVSQLKELLNDMGFSTPEEKFQKDPPFKWMGYELWPKKWKLQKIQLPEKEVWTVNAIQKLVGVLNWAAQLFPGIKTRHICKLIRGKMTLTEEVQWTELAEAELQENKIILEQEQEGSYYKERVPLEATVQKNLANQWTYKIHQGNKVLKVGKYAKVKNTHTNGVRLLAHVVQKIGKEALVIWGEIPVFHLPVERETWDQWWTDYWQVTWIPEWDFVSTPPLIRLAYNLVKDPLEGRETYYTDGSCNRTSKEGKAGYVTDRGKDKVKVLEQTTNQQAELEAFALALTDSEPQVNIIVDSQYVMGIIAAQPTETESPIVAKIIEEMIKKEAVYVGWVPAHKGLGGNQEVDHLVSQGIRQVLFLEKIEPAQEEHEKYHGNVKELVHKFGIPQLVAKQIVNSCDKCQQKGEAIHGQVNADLGTWQMDCTHLEGKIIIVAVHVASGFIEAEVIPQETGRQTALFLLKLASRWPITHLHTDNGANFTSPSVKMVAWWVGIEQTFGVPYNPQSQGVVEAMNHHLKNQIDRLRDQAVSIETVVLMATHCMNFKRRGGIGDMTPAERLVNMITTEQEIQFFQAKNLKFQNFQVYYREGRDQLWKGPGELLWKGEGAVIIKVGTEIKVVPRRKAKIIRHYGGGKGLDCSADMEDTRQAREMAQSD.

Glycine 2 is lipidated: N-myristoyl glycine; by host. The interaction with Gp41 stretch occupies residues 7-31 (VLSGKKTDELEKVRLRPGGKKKYML). A Nuclear export signal motif is present at residues 16 to 22 (LEKVRLR). The Nuclear localization signal signature appears at 26–32 (KKKYMLK). The segment covering 105 to 114 (QRHLAADTEK) has biased composition (basic and acidic residues). The disordered stretch occupies residues 105 to 129 (QRHLAADTEKMPATNKPTAPPSGGN). Position 130 is a phosphotyrosine; by host (tyrosine 130). An interaction with human PPIA/CYPA and NUP153 region spans residues 186 to 223 (NCVGEHQAAMQIIREIINEEAADWDQQHPSPGPMPAGQ). The segment at 274 to 360 (YNPTNILDIK…GGPGQKARLM (87 aa)) is dimerization/Multimerization of capsid protein p24. 2 consecutive CCHC-type zinc fingers follow at residues 388 to 405 (VTCW…QCRA) and 409 to 426 (QGCW…KCPE). Residues 441-508 (ASQLPHDPSA…PRETLQGGDR (68 aa)) are disordered. Over residues 484-501 (DAEKLHADGETTEREPRE) the composition is skewed to basic and acidic residues. Positions 513–517 (PQFSL) are dimerization of protease. The Peptidase A2 domain maps to 532–601 (VEVLLDTGVD…TPINIFGRNI (70 aa)). Aspartate 537 functions as the For protease activity; shared with dimeric partner in the catalytic mechanism. Dimerization of protease regions lie at residues 561–567 (GIGGFIN) and 600–612 (NILN…LNFP). The 190-residue stretch at 655–844 (EGQLEEAPPT…PPFKWMGYEL (190 aa)) folds into the Reverse transcriptase domain. The Mg(2+) site is built by aspartate 720, aspartate 795, and aspartate 796. An RT 'primer grip' region spans residues 837 to 845 (FKWMGYELW). A Tryptophan repeat motif motif is present at residues 1007 to 1023 (WDQWWTDYWQVTWIPEW). Residues 1043 to 1166 (LEGRETYYTD…VDHLVSQGIR (124 aa)) enclose the RNase H type-1 domain. Mg(2+) is bound by residues aspartate 1052, glutamate 1087, aspartate 1107, and aspartate 1158. Residues 1172–1213 (EKIEPAQEEHEKYHGNVKELVHKFGIPQLVAKQIVNSCDKCQ) form an Integrase-type zinc finger. Zn(2+) contacts are provided by histidine 1181, histidine 1185, cysteine 1209, and cysteine 1212. Residues 1222–1373 (QVNADLGTWQ…TPAERLVNMI (152 aa)) form the Integrase catalytic domain. Mg(2+) is bound by residues aspartate 1233, aspartate 1285, and glutamate 1321. Residues 1392–1439 (FQVYYREGRDQLWKGPGELLWKGEGAVIIKVGTEIKVVPRRKAKIIRH) constitute a DNA-binding region (integrase-type).

Homotrimer; further assembles as hexamers of trimers. Interacts with gp41 (via C-terminus). Interacts with host CALM1; this interaction induces a conformational change in the Matrix protein, triggering exposure of the myristate group. Interacts with host AP3D1; this interaction allows the polyprotein trafficking to multivesicular bodies during virus assembly. Part of the pre-integration complex (PIC) which is composed of viral genome, matrix protein, Vpr and integrase. In terms of assembly, homodimer; the homodimer further multimerizes as homohexamers or homopentamers. Interacts with human PPIA/CYPA. Interacts with human NUP153. Interacts with host PDZD8; this interaction stabilizes the capsid. Interacts with monkey TRIM5; this interaction destabilizes the capsid. As to quaternary structure, homodimer, whose active site consists of two apposed aspartic acid residues. Heterodimer of p66 RT and p51 RT (RT p66/p51). Heterodimerization of RT is essential for DNA polymerase activity. The overall folding of the subdomains is similar in p66 RT and p51 RT but the spatial arrangements of the subdomains are dramatically different. In terms of assembly, homotetramer; may further associate as a homohexadecamer. Part of the pre-integration complex (PIC) which is composed of viral genome, matrix protein, Vpr and integrase. Interacts with human SMARCB1/INI1 and human PSIP1/LEDGF isoform 1. Interacts with human KPNA3; this interaction might play a role in nuclear import of the pre-integration complex. Interacts with human NUP153; this interaction might play a role in nuclear import of the pre-integration complex. The cofactor is Mg(2+). In terms of processing, specific enzymatic cleavages by the viral protease yield mature proteins. The protease is released by autocatalytic cleavage. The polyprotein is cleaved during and after budding, this process is termed maturation. Proteolytic cleavage of p66 RT removes the RNase H domain to yield the p51 RT subunit. Nucleocapsid protein p7 might be further cleaved after virus entry.

The protein localises to the host cell membrane. It localises to the host endosome. Its subcellular location is the host multivesicular body. It is found in the virion membrane. The protein resides in the host nucleus. The protein localises to the host cytoplasm. It localises to the virion. It catalyses the reaction Endopeptidase for which the P1 residue is preferably hydrophobic.. The catalysed reaction is Endohydrolysis of RNA in RNA/DNA hybrids. Three different cleavage modes: 1. sequence-specific internal cleavage of RNA. Human immunodeficiency virus type 1 and Moloney murine leukemia virus enzymes prefer to cleave the RNA strand one nucleotide away from the RNA-DNA junction. 2. RNA 5'-end directed cleavage 13-19 nucleotides from the RNA end. 3. DNA 3'-end directed cleavage 15-20 nucleotides away from the primer terminus.. It carries out the reaction 3'-end directed exonucleolytic cleavage of viral RNA-DNA hybrid.. The enzyme catalyses DNA(n) + a 2'-deoxyribonucleoside 5'-triphosphate = DNA(n+1) + diphosphate. Protease: The viral protease is inhibited by many synthetic protease inhibitors (PIs), such as amprenavir, atazanavir, indinavir, loprinavir, nelfinavir, ritonavir and saquinavir. Use of protease inhibitors in tritherapy regimens permit more ambitious therapeutic strategies. Reverse transcriptase/ribonuclease H: RT can be inhibited either by nucleoside RT inhibitors (NRTIs) or by non nucleoside RT inhibitors (NNRTIs). NRTIs act as chain terminators, whereas NNRTIs inhibit DNA polymerization by binding a small hydrophobic pocket near the RT active site and inducing an allosteric change in this region. Classical NRTIs are abacavir, adefovir (PMEA), didanosine (ddI), lamivudine (3TC), stavudine (d4T), tenofovir (PMPA), zalcitabine (ddC), and zidovudine (AZT). Classical NNRTIs are atevirdine (BHAP U-87201E), delavirdine, efavirenz (DMP-266), emivirine (I-EBU), and nevirapine (BI-RG-587). The tritherapies used as a basic effective treatment of AIDS associate two NRTIs and one NNRTI. Functionally, mediates, with Gag polyprotein, the essential events in virion assembly, including binding the plasma membrane, making the protein-protein interactions necessary to create spherical particles, recruiting the viral Env proteins, and packaging the genomic RNA via direct interactions with the RNA packaging sequence (Psi). Gag-Pol polyprotein may regulate its own translation, by the binding genomic RNA in the 5'-UTR. At low concentration, the polyprotein would promote translation, whereas at high concentration, the polyprotein would encapsidate genomic RNA and then shut off translation. In terms of biological role, targets the polyprotein to the plasma membrane via a multipartite membrane-binding signal, that includes its myristoylated N-terminus. Matrix protein is part of the pre-integration complex. Implicated in the release from host cell mediated by Vpu. Binds to RNA. Its function is as follows. Forms the conical core that encapsulates the genomic RNA-nucleocapsid complex in the virion. Most core are conical, with only 7% tubular. The core is constituted by capsid protein hexamer subunits. The core is disassembled soon after virion entry. Host restriction factors such as TRIM5-alpha or TRIMCyp bind retroviral capsids and cause premature capsid disassembly, leading to blocks in reverse transcription. Capsid restriction by TRIM5 is one of the factors which restricts HIV-1 to the human species. Host PIN1 apparently facilitates the virion uncoating. On the other hand, interactions with PDZD8 or CYPA stabilize the capsid. Encapsulates and protects viral dimeric unspliced genomic RNA (gRNA). Binds these RNAs through its zinc fingers. Acts as a nucleic acid chaperone which is involved in rearangement of nucleic acid secondary structure during gRNA retrotranscription. Also facilitates template switch leading to recombination. As part of the polyprotein, participates in gRNA dimerization, packaging, tRNA incorporation and virion assembly. Functionally, aspartyl protease that mediates proteolytic cleavages of Gag and Gag-Pol polyproteins during or shortly after the release of the virion from the plasma membrane. Cleavages take place as an ordered, step-wise cascade to yield mature proteins. This process is called maturation. Displays maximal activity during the budding process just prior to particle release from the cell. Also cleaves Nef and Vif, probably concomitantly with viral structural proteins on maturation of virus particles. Hydrolyzes host EIF4GI and PABP1 in order to shut off the capped cellular mRNA translation. The resulting inhibition of cellular protein synthesis serves to ensure maximal viral gene expression and to evade host immune response. In terms of biological role, multifunctional enzyme that converts the viral RNA genome into dsDNA in the cytoplasm, shortly after virus entry into the cell. This enzyme displays a DNA polymerase activity that can copy either DNA or RNA templates, and a ribonuclease H (RNase H) activity that cleaves the RNA strand of RNA-DNA heteroduplexes in a partially processive 3' to 5' endonucleasic mode. Conversion of viral genomic RNA into dsDNA requires many steps. A tRNA(3)-Lys binds to the primer-binding site (PBS) situated at the 5'-end of the viral RNA. RT uses the 3' end of the tRNA primer to perform a short round of RNA-dependent minus-strand DNA synthesis. The reading proceeds through the U5 region and ends after the repeated (R) region which is present at both ends of viral RNA. The portion of the RNA-DNA heteroduplex is digested by the RNase H, resulting in a ssDNA product attached to the tRNA primer. This ssDNA/tRNA hybridizes with the identical R region situated at the 3' end of viral RNA. This template exchange, known as minus-strand DNA strong stop transfer, can be either intra- or intermolecular. RT uses the 3' end of this newly synthesized short ssDNA to perform the RNA-dependent minus-strand DNA synthesis of the whole template. RNase H digests the RNA template except for two polypurine tracts (PPTs) situated at the 5'-end and near the center of the genome. It is not clear if both polymerase and RNase H activities are simultaneous. RNase H probably can proceed both in a polymerase-dependent (RNA cut into small fragments by the same RT performing DNA synthesis) and a polymerase-independent mode (cleavage of remaining RNA fragments by free RTs). Secondly, RT performs DNA-directed plus-strand DNA synthesis using the PPTs that have not been removed by RNase H as primers. PPTs and tRNA primers are then removed by RNase H. The 3' and 5' ssDNA PBS regions hybridize to form a circular dsDNA intermediate. Strand displacement synthesis by RT to the PBS and PPT ends produces a blunt ended, linear dsDNA copy of the viral genome that includes long terminal repeats (LTRs) at both ends. Its function is as follows. Catalyzes viral DNA integration into the host chromosome, by performing a series of DNA cutting and joining reactions. This enzyme activity takes place after virion entry into a cell and reverse transcription of the RNA genome in dsDNA. The first step in the integration process is 3' processing. This step requires a complex comprising the viral genome, matrix protein, Vpr and integrase. This complex is called the pre-integration complex (PIC). The integrase protein removes 2 nucleotides from each 3' end of the viral DNA, leaving recessed CA OH's at the 3' ends. In the second step, the PIC enters cell nucleus. This process is mediated through integrase and Vpr proteins, and allows the virus to infect a non dividing cell. This ability to enter the nucleus is specific of lentiviruses, other retroviruses cannot and rely on cell division to access cell chromosomes. In the third step, termed strand transfer, the integrase protein joins the previously processed 3' ends to the 5' ends of strands of target cellular DNA at the site of integration. The 5'-ends are produced by integrase-catalyzed staggered cuts, 5 bp apart. A Y-shaped, gapped, recombination intermediate results, with the 5'-ends of the viral DNA strands and the 3' ends of target DNA strands remaining unjoined, flanking a gap of 5 bp. The last step is viral DNA integration into host chromosome. This involves host DNA repair synthesis in which the 5 bp gaps between the unjoined strands are filled in and then ligated. Since this process occurs at both cuts flanking the HIV genome, a 5 bp duplication of host DNA is produced at the ends of HIV-1 integration. Alternatively, Integrase may catalyze the excision of viral DNA just after strand transfer, this is termed disintegration. The protein is Gag-Pol polyprotein (gag-pol) of Human immunodeficiency virus type 2 subtype B (isolate D205) (HIV-2).